The primary structure comprises 436 residues: tRNA-2-methylthio-N(6)-dimethylallyladenosine synthase (436 aa).

The region spanning arginine 5 to glycine 121 is the MTTase N-terminal domain. 6 residues coordinate [4Fe-4S] cluster: cysteine 14, cysteine 50, cysteine 84, cysteine 158, cysteine 162, and cysteine 165. A Radical SAM core domain is found at alanine 144 to alanine 374. The 63-residue stretch at methionine 373–glycine 435 folds into the TRAM domain.

The protein belongs to the methylthiotransferase family. MiaB subfamily. Monomer. It depends on [4Fe-4S] cluster as a cofactor.

The protein localises to the cytoplasm. The enzyme catalyses N(6)-dimethylallyladenosine(37) in tRNA + (sulfur carrier)-SH + AH2 + 2 S-adenosyl-L-methionine = 2-methylsulfanyl-N(6)-dimethylallyladenosine(37) in tRNA + (sulfur carrier)-H + 5'-deoxyadenosine + L-methionine + A + S-adenosyl-L-homocysteine + 2 H(+). Catalyzes the methylthiolation of N6-(dimethylallyl)adenosine (i(6)A), leading to the formation of 2-methylthio-N6-(dimethylallyl)adenosine (ms(2)i(6)A) at position 37 in tRNAs that read codons beginning with uridine. In Cereibacter sphaeroides (strain ATCC 17029 / ATH 2.4.9) (Rhodobacter sphaeroides), this protein is tRNA-2-methylthio-N(6)-dimethylallyladenosine synthase.